A 446-amino-acid chain; its full sequence is Methylenetetrahydrofolate--tRNA-(uracil-5-)-methyltransferase TrmFO (446 aa).

8-13 (GAGLAG) contributes to the FAD binding site.

Belongs to the MnmG family. TrmFO subfamily. FAD serves as cofactor.

It is found in the cytoplasm. The catalysed reaction is uridine(54) in tRNA + (6R)-5,10-methylene-5,6,7,8-tetrahydrofolate + NADH + H(+) = 5-methyluridine(54) in tRNA + (6S)-5,6,7,8-tetrahydrofolate + NAD(+). It carries out the reaction uridine(54) in tRNA + (6R)-5,10-methylene-5,6,7,8-tetrahydrofolate + NADPH + H(+) = 5-methyluridine(54) in tRNA + (6S)-5,6,7,8-tetrahydrofolate + NADP(+). Its function is as follows. Catalyzes the folate-dependent formation of 5-methyl-uridine at position 54 (M-5-U54) in all tRNAs. This chain is Methylenetetrahydrofolate--tRNA-(uracil-5-)-methyltransferase TrmFO, found in Paracoccus denitrificans (strain Pd 1222).